We begin with the raw amino-acid sequence, 305 residues long: Cell division control protein 2 homolog C (305 aa).

One can recognise a Protein kinase domain in the interval 4–297 (YEKLEKVGEG…AKAALDHPYF (294 aa)). Residues 10 to 18 (VGEGTYGKV) and lysine 33 contribute to the ATP site. Threonine 14 bears the Phosphothreonine mark. Tyrosine 15 is subject to Phosphotyrosine. Aspartate 138 (proton acceptor) is an active-site residue. Phosphothreonine; by CAK is present on threonine 172.

Belongs to the protein kinase superfamily. CMGC Ser/Thr protein kinase family. CDC2/CDKX subfamily.

It catalyses the reaction L-seryl-[protein] + ATP = O-phospho-L-seryl-[protein] + ADP + H(+). The catalysed reaction is L-threonyl-[protein] + ATP = O-phospho-L-threonyl-[protein] + ADP + H(+). The enzyme catalyses [DNA-directed RNA polymerase] + ATP = phospho-[DNA-directed RNA polymerase] + ADP + H(+). Its function is as follows. Plays a key role in the control of the eukaryotic cell cycle. The sequence is that of Cell division control protein 2 homolog C (CDC2C) from Antirrhinum majus (Garden snapdragon).